The following is a 63-amino-acid chain: ATP synthase F(0) complex subunit 8 (63 aa).

The chain crosses the membrane as a helical span at residues 8–24 (TWLLTILSMLLTLFVLF). The residue at position 57 (Lys-57) is an N6-acetyllysine.

This sequence belongs to the ATPase protein 8 family. Component of the ATP synthase complex composed at least of ATP5F1A/subunit alpha, ATP5F1B/subunit beta, ATP5MC1/subunit c (homooctomer), MT-ATP6/subunit a, MT-ATP8/subunit 8, ATP5ME/subunit e, ATP5MF/subunit f, ATP5MG/subunit g, ATP5MK/subunit k, ATP5MJ/subunit j, ATP5F1C/subunit gamma, ATP5F1D/subunit delta, ATP5F1E/subunit epsilon, ATP5PF/subunit F6, ATP5PB/subunit b, ATP5PD/subunit d, ATP5PO/subunit OSCP. ATP synthase complex consists of a soluble F(1) head domain (subunits alpha(3) and beta(3)) - the catalytic core - and a membrane F(0) domain - the membrane proton channel (subunits c, a, 8, e, f, g, k and j). These two domains are linked by a central stalk (subunits gamma, delta, and epsilon) rotating inside the F1 region and a stationary peripheral stalk (subunits F6, b, d, and OSCP). Interacts with PRICKLE3.

It localises to the mitochondrion membrane. Its function is as follows. Subunit 8, of the mitochondrial membrane ATP synthase complex (F(1)F(0) ATP synthase or Complex V) that produces ATP from ADP in the presence of a proton gradient across the membrane which is generated by electron transport complexes of the respiratory chain. ATP synthase complex consist of a soluble F(1) head domain - the catalytic core - and a membrane F(1) domain - the membrane proton channel. These two domains are linked by a central stalk rotating inside the F(1) region and a stationary peripheral stalk. During catalysis, ATP synthesis in the catalytic domain of F(1) is coupled via a rotary mechanism of the central stalk subunits to proton translocation. In vivo, can only synthesize ATP although its ATP hydrolase activity can be activated artificially in vitro. Part of the complex F(0) domain. The sequence is that of ATP synthase F(0) complex subunit 8 from Balaenoptera musculus (Blue whale).